Reading from the N-terminus, the 306-residue chain is Follistatin-related protein 1 (306 aa).

Residues 1–18 form the signal peptide; the sequence is MWKRWLALALVAVAWVRA. The region spanning 28–51 is the Follistatin-like domain; the sequence is ICANVFCGAGRECAVTEKGEPTCL. 5 disulfides stabilise this stretch: C29–C40, C34–C50, C52–C82, C56–C75, and C64–C96. A Kazal-like domain is found at 46–98; it reads GEPTCLCIEQCKPHKRPVCGSNGKTYLNHCELHRDACLTGSKIQVDYDGHCKE. The N-linked (GlcNAc...) asparagine glycan is linked to N142. An EF-hand 1 domain is found at 142–176; sequence NYSEILDKYFKNFDNGDSRLDSSEFLKFVEQNETA. S163 bears the Phosphoserine mark. Residues N173 and N178 are each glycosylated (N-linked (GlcNAc...) asparagine). Residues 191–226 enclose the EF-hand 2 domain; that stretch reads LRGLCVDALIELSDENADWKLSFQEFLKCLNPSFNP. The 55-residue stretch at 231–285 folds into the VWFC domain; the sequence is CALEDETYADGAETEVDCNRCVCACGNWVCTAMTCDGKNQKGAQTQTEEEMTRYV.

Homodimer. Interacts with SCN10A. Interacts with DIP2A; DIP2A may act as a cell surface receptor for FSTL1. Interacts with BMP4. Interacts with CD14; this interaction promotes TL4-mediated signaling cascade.

It is found in the secreted. Functionally, secreted glycoprotein that is involved in various physiological processes, such as angiogenesis, regulation of the immune response, cell proliferation and differentiation. Plays a role in the development of the central nervous system, skeletal system, lungs, and ureter. Promotes endothelial cell survival, migration and differentiation into network structures in an AKT-dependent manner. Also promotes survival of cardiac myocytes. Initiates various signaling cascades by activating different receptors on the cell surface such as DIP2A, TLR4 or BMP receptors. This is Follistatin-related protein 1 (FSTL1) from Pongo abelii (Sumatran orangutan).